A 497-amino-acid polypeptide reads, in one-letter code: 3-octaprenyl-4-hydroxybenzoate carboxy-lyase (497 aa).

A Mn(2+)-binding site is contributed by Asn-175. Prenylated FMN contacts are provided by residues 178-180 (IYR), 192-194 (RWL), and 197-198 (RG). Position 241 (Glu-241) interacts with Mn(2+). Asp-290 functions as the Proton donor in the catalytic mechanism.

This sequence belongs to the UbiD family. Homohexamer. Prenylated FMN serves as cofactor. It depends on Mn(2+) as a cofactor.

It is found in the cell membrane. The catalysed reaction is a 4-hydroxy-3-(all-trans-polyprenyl)benzoate + H(+) = a 2-(all-trans-polyprenyl)phenol + CO2. The protein operates within cofactor biosynthesis; ubiquinone biosynthesis. In terms of biological role, catalyzes the decarboxylation of 3-octaprenyl-4-hydroxy benzoate to 2-octaprenylphenol, an intermediate step in ubiquinone biosynthesis. The chain is 3-octaprenyl-4-hydroxybenzoate carboxy-lyase from Shigella boydii serotype 4 (strain Sb227).